The sequence spans 70 residues: Large ribosomal subunit protein eL38 (70 aa).

This sequence belongs to the eukaryotic ribosomal protein eL38 family.

The protein is Large ribosomal subunit protein eL38 (RpL38) of Timarcha balearica.